Here is a 140-residue protein sequence, read N- to C-terminus: Large ribosomal subunit protein bL17 (140 aa).

This sequence belongs to the bacterial ribosomal protein bL17 family. In terms of assembly, part of the 50S ribosomal subunit. Contacts protein L32.

The chain is Large ribosomal subunit protein bL17 from Paramagnetospirillum magneticum (strain ATCC 700264 / AMB-1) (Magnetospirillum magneticum).